Consider the following 263-residue polypeptide: Small ribosomal subunit protein uS2 (263 aa).

This sequence belongs to the universal ribosomal protein uS2 family. As to quaternary structure, component of the small ribosomal subunit. Mature ribosomes consist of a small (40S) and a large (60S) subunit. The 40S subunit contains about 33 different proteins and 1 molecule of RNA (18S). The 60S subunit contains about 49 different proteins and 3 molecules of RNA (25S, 5.8S and 5S). Interacts with RPS21.

The protein resides in the cytoplasm. Required for the assembly and/or stability of the 40S ribosomal subunit. Required for the processing of the 20S rRNA-precursor to mature 18S rRNA in a late step of the maturation of 40S ribosomal subunits. The protein is Small ribosomal subunit protein uS2 of Vairimorpha ceranae (strain BRL01) (Microsporidian parasite).